Here is a 523-residue protein sequence, read N- to C-terminus: Mitochondrial distribution and morphology protein 12 (523 aa).

The SMP-LTD domain maps to 1 to 483 (MSFDINWEKL…WPSWICVDMA (483 aa)). The span at 108–117 (HEADIINDHD) shows a compositional bias: basic and acidic residues. 4 disordered regions span residues 108–160 (HEAD…QYDE), 178–213 (SASTPKRTSPQRPPLISPRGEVTQQTLSKPKEPFQS), 270–313 (KTKE…NAKN), and 483–523 (AEND…KKED). 2 stretches are compositionally biased toward acidic residues: residues 118–140 (YGDEDDIDDDYDNDSDDYDDDEN) and 148–158 (EDEENEESSQY). Composition is skewed to polar residues over residues 178–187 (SASTPKRTSP) and 277–288 (SGDQQQGKQTGK). Residues 289–313 (ANEKGQKHKHEHEEEQGSDKQNAKN) show a composition bias toward basic and acidic residues. The span at 483–501 (AENDDEEEDDDDDDHDEDN) shows a compositional bias: acidic residues. Residues 502–523 (EGRGRMRDTGDVDVRDHDKKED) are compositionally biased toward basic and acidic residues.

It belongs to the MDM12 family. Component of the ER-mitochondria encounter structure (ERMES) or MDM complex, composed of MMM1, MDM10, MDM12 and MDM34. An MMM1 homodimer associates with one molecule of MDM12 on each side in a pairwise head-to-tail manner, and the SMP-LTD domains of MMM1 and MDM12 generate a continuous hydrophobic tunnel for phospholipid trafficking.

It localises to the mitochondrion outer membrane. It is found in the endoplasmic reticulum membrane. In terms of biological role, component of the ERMES/MDM complex, which serves as a molecular tether to connect the endoplasmic reticulum (ER) and mitochondria. Components of this complex are involved in the control of mitochondrial shape and protein biogenesis, and function in nonvesicular lipid trafficking between the ER and mitochondria. MDM12 is required for the interaction of the ER-resident membrane protein MMM1 and the outer mitochondrial membrane-resident beta-barrel protein MDM10. The MDM12-MMM1 subcomplex functions in the major beta-barrel assembly pathway that is responsible for biogenesis of all mitochondrial outer membrane beta-barrel proteins, and acts in a late step after the SAM complex. The MDM10-MDM12-MMM1 subcomplex further acts in the TOM40-specific pathway after the action of the MDM12-MMM1 complex. Essential for establishing and maintaining the structure of mitochondria and maintenance of mtDNA nucleoids. The polypeptide is Mitochondrial distribution and morphology protein 12 (Lodderomyces elongisporus (strain ATCC 11503 / CBS 2605 / JCM 1781 / NBRC 1676 / NRRL YB-4239) (Yeast)).